The primary structure comprises 255 residues: High-affinity branched-chain amino acid transport ATP-binding protein BraF (255 aa).

Residues Leu-6–Glu-254 form the ABC transporter domain. Residue Gly-38 to Thr-45 coordinates ATP.

It belongs to the ABC transporter superfamily.

It localises to the cell inner membrane. In terms of biological role, component of the high affinity leucine, isoleucine, valine, transport system (LIV-I), which is operative without Na(+) and is specific for alanine and threonine, in addition to branched-chain amino acids. This chain is High-affinity branched-chain amino acid transport ATP-binding protein BraF (braF), found in Pseudomonas aeruginosa (strain ATCC 15692 / DSM 22644 / CIP 104116 / JCM 14847 / LMG 12228 / 1C / PRS 101 / PAO1).